The primary structure comprises 220 residues: Vesicle-associated membrane protein 7 (220 aa).

Ala-2 is subject to N-acetylalanine. The Cytoplasmic segment spans residues 2–188 (AILFAVVARG…ARAMCMKNLK (187 aa)). Residues 7–110 (VVARGTTILA…AMNSEFSSVL (104 aa)) enclose the Longin domain. Positions 125 to 185 (KVMETQAQVD…RNLARAMCMK (61 aa)) constitute a v-SNARE coiled-coil homology domain. A phosphoserine mark is found at Ser-167 and Ser-168. A helical; Anchor for type IV membrane protein transmembrane segment spans residues 189 to 209 (LTIIIIIVSIVFIYIIVSPLC). Residues 210 to 220 (GGFTWPSCVKK) lie on the Vesicular side of the membrane.

The protein belongs to the synaptobrevin family. Component of the SNARE complex composed of STX4, SNAP23 and VAMP7 that binds SYT7 during lysosomal exocytosis. Component of the SNARE complex composed of STX7, STX8, VAMP7 and VTI1B that is required for heterotypic fusion of late endosomes with lysosomes in liver cells. May interact with STX17. Interacts with PICALM. Interacts with RAB21.

It localises to the cytoplasmic vesicle. Its subcellular location is the secretory vesicle membrane. The protein localises to the golgi apparatus. It is found in the trans-Golgi network membrane. The protein resides in the late endosome membrane. It localises to the lysosome membrane. Its subcellular location is the endoplasmic reticulum membrane. The protein localises to the phagosome membrane. It is found in the synapse. The protein resides in the synaptosome. Its function is as follows. Involved in the targeting and/or fusion of transport vesicles to their target membrane during transport of proteins from the early endosome to the lysosome. Required for heterotypic fusion of late endosomes with lysosomes and homotypic lysosomal fusion. Required for calcium regulated lysosomal exocytosis. Involved in the export of chylomicrons from the endoplasmic reticulum to the cis Golgi. Required for exocytosis of mediators during eosinophil and neutrophil degranulation, and target cell killing by natural killer cells. Required for focal exocytosis of late endocytic vesicles during phagosome formation. The chain is Vesicle-associated membrane protein 7 (VAMP7) from Pongo abelii (Sumatran orangutan).